We begin with the raw amino-acid sequence, 35 residues long: Photosystem II reaction center protein Psb30 (35 aa).

Residues 7-27 traverse the membrane as a helical segment; sequence VFVQLALLALIVLAGPAVILL.

The protein belongs to the Psb30/Ycf12 family. In terms of assembly, PSII is composed of 1 copy each of membrane proteins PsbA, PsbB, PsbC, PsbD, PsbE, PsbF, PsbH, PsbI, PsbJ, PsbK, PsbL, PsbM, PsbT, PsbX, PsbY, PsbZ, Psb30/Ycf12, peripheral proteins PsbO, CyanoQ (PsbQ), PsbU, PsbV and a large number of cofactors. It forms dimeric complexes.

It is found in the cellular thylakoid membrane. A core subunit of photosystem II (PSII), probably helps stabilize the reaction center. This chain is Photosystem II reaction center protein Psb30, found in Synechococcus sp. (strain JA-2-3B'a(2-13)) (Cyanobacteria bacterium Yellowstone B-Prime).